A 368-amino-acid chain; its full sequence is uncharacterized protein (368 aa).

It belongs to the CdaR family.

This is an uncharacterized protein from Haemophilus influenzae (strain ATCC 51907 / DSM 11121 / KW20 / Rd).